Consider the following 85-residue polypeptide: Small ribosomal subunit protein bS16 (85 aa).

This sequence belongs to the bacterial ribosomal protein bS16 family.

The sequence is that of Small ribosomal subunit protein bS16 from Pelobacter propionicus (strain DSM 2379 / NBRC 103807 / OttBd1).